Here is a 347-residue protein sequence, read N- to C-terminus: uncharacterized protein (347 aa).

The signal sequence occupies residues 1–21 (MNKKSLNIVVMFGILMILAFS).

This sequence belongs to the bacterial solute-binding protein 1 family. WtpA subfamily.

This is an uncharacterized protein from Methanococcus maripaludis (strain C5 / ATCC BAA-1333).